Consider the following 248-residue polypeptide: Anamorsin homolog (248 aa).

An N-terminal SAM-like domain region spans residues 4-129; sequence FKGLQKTLYI…ETGSSARLSF (126 aa). A linker region spans residues 130-161; the sequence is AKKDASALNVWKISGDDEELIDEEDLLDEEDK. [2Fe-2S] cluster is bound by residues Cys-172, Cys-181, Cys-184, and Cys-186. Residues 172 to 186 are fe-S binding site A; the sequence is CSTTGKRKACKNCSC. [4Fe-4S] cluster contacts are provided by Cys-209, Cys-212, Cys-220, and Cys-223. 2 short sequence motifs (cx2C motif) span residues 209 to 212 and 220 to 223; these read CGNC and CSTC. The fe-S binding site B stretch occupies residues 209–223; sequence CGNCYLGDAFRCSTC.

The protein belongs to the anamorsin family. As to quaternary structure, monomer. [2Fe-2S] cluster is required as a cofactor. The cofactor is [4Fe-4S] cluster.

It localises to the cytoplasm. Its subcellular location is the mitochondrion intermembrane space. Its function is as follows. Component of the cytosolic iron-sulfur (Fe-S) protein assembly (CIA) machinery. Required for the maturation of extramitochondrial Fe-S proteins. Part of an electron transfer chain functioning in an early step of cytosolic Fe-S biogenesis, facilitating the de novo assembly of a [4Fe-4S] cluster on the cytosolic Fe-S scaffold complex. Electrons are transferred from NADPH via a FAD- and FMN-containing diflavin oxidoreductase. Together with the diflavin oxidoreductase, also required for the assembly of the diferric tyrosyl radical cofactor of ribonucleotide reductase (RNR), probably by providing electrons for reduction during radical cofactor maturation in the catalytic small subunit. This Drosophila ananassae (Fruit fly) protein is Anamorsin homolog.